The chain runs to 199 residues: Probable GTP-binding protein EngB (199 aa).

Residues 22 to 196 enclose the EngB-type G domain; sequence NWPEFAFSGR…GKFILDLVDS (175 aa). GTP contacts are provided by residues 30-37, 57-61, 75-78, 142-145, and 175-177; these read GRSNVGKS, GRTQS, DLPG, TKVD, and FSA. Mg(2+) is bound by residues S37 and T59.

This sequence belongs to the TRAFAC class TrmE-Era-EngA-EngB-Septin-like GTPase superfamily. EngB GTPase family. Mg(2+) serves as cofactor.

In terms of biological role, necessary for normal cell division and for the maintenance of normal septation. This Halothermothrix orenii (strain H 168 / OCM 544 / DSM 9562) protein is Probable GTP-binding protein EngB.